Consider the following 25-residue polypeptide: Zinc metalloproteinase-disintegrin-like daborhagin-M (25 aa).

A Peptidase M12B domain is found at 14–25; that stretch reads SYVELIITVDHS. Glutamate 17 is a Ca(2+) binding site.

It belongs to the venom metalloproteinase (M12B) family. P-III subfamily. P-IIIa sub-subfamily. Monomer. Zn(2+) serves as cofactor. In terms of processing, N-glycosylated. Post-translationally, contains 16 disulfide bonds. In terms of tissue distribution, expressed by the venom gland.

It localises to the secreted. With respect to regulation, inhibited by EDTA, EGTA and 1,10-phenanthroline. Addition of Mg(2+) or Ca(2+) increases the casein hydrolysis rate. Functionally, snake venom zinc metalloprotease that possesses high hemorrhagic activity (minimum hemorrhagic dose, MHD=0.86 ug) when subcutaneously injected into mice. Has potent fibrinogenolytic activity on alpha-chain of fibrinogen (FGA). Hydrolyzes model substrate (beta-chain of insulin) at Ala(14)-Leu(15) and Tyr(16)-Leu(17) followed by His(10)-Leu(11) and Phe(24)-Phe(25). The sequence is that of Zinc metalloproteinase-disintegrin-like daborhagin-M from Daboia siamensis (Eastern Russel's viper).